The following is a 306-amino-acid chain: MTHSSVNASSDPDLSHIGPRDKAEILAQALPYIRKFHGKTLVIKYGGNAMTDPALQADFAEDVVLLKLVGMNPVVVHGGGPQIETALNRLGKKGHFIQGMRVTDDETMEVVEWVLAGQVQQDIVGLINQAGGKAVGLTGRDGGMIRAKKLTMLDKDDASKEHDIGFVGEIVSIDPSVVKALQDDAFIPVISPIGFGENNESYNINADVVAGKLATVLKAEKLVLLTNIPGVLNKAGELLTDLTAREIDELFADGTISGGMLPKIEGALDAAKSGVNAVHIIDGRVPHAMLLEILTDKAYGTMIRSH.

Residues 79 to 80, R101, and N203 contribute to the substrate site; that span reads GG.

Belongs to the acetylglutamate kinase family. ArgB subfamily.

It localises to the cytoplasm. The catalysed reaction is N-acetyl-L-glutamate + ATP = N-acetyl-L-glutamyl 5-phosphate + ADP. It participates in amino-acid biosynthesis; L-arginine biosynthesis; N(2)-acetyl-L-ornithine from L-glutamate: step 2/4. Its function is as follows. Catalyzes the ATP-dependent phosphorylation of N-acetyl-L-glutamate. This chain is Acetylglutamate kinase, found in Polaromonas naphthalenivorans (strain CJ2).